Reading from the N-terminus, the 350-residue chain is tRNA uridine(34) hydroxylase (350 aa).

The Rhodanese domain maps to 146 to 240 (DDPDAVFIDM…YARRAREQGL (95 aa)). C200 serves as the catalytic Cysteine persulfide intermediate. The span at 319–328 (RRRRAGRENG) shows a compositional bias: basic and acidic residues. The interval 319–350 (RRRRAGRENGNKIFNKSRGRLNSKLSIPDPAE) is disordered.

The protein belongs to the TrhO family.

It carries out the reaction uridine(34) in tRNA + AH2 + O2 = 5-hydroxyuridine(34) in tRNA + A + H2O. Functionally, catalyzes oxygen-dependent 5-hydroxyuridine (ho5U) modification at position 34 in tRNAs. This Salmonella dublin (strain CT_02021853) protein is tRNA uridine(34) hydroxylase.